The sequence spans 90 residues: YcgL domain-containing protein YE2368 (90 aa).

Positions 1–85 (MLCAIYRSPK…PPESLLKMHL (85 aa)) constitute a YcgL domain.

The sequence is that of YcgL domain-containing protein YE2368 from Yersinia enterocolitica serotype O:8 / biotype 1B (strain NCTC 13174 / 8081).